The primary structure comprises 161 residues: Ribosome maturation factor RimP (161 aa).

This sequence belongs to the RimP family.

It localises to the cytoplasm. Functionally, required for maturation of 30S ribosomal subunits. The chain is Ribosome maturation factor RimP from Desulfosudis oleivorans (strain DSM 6200 / JCM 39069 / Hxd3) (Desulfococcus oleovorans).